A 179-amino-acid polypeptide reads, in one-letter code: ATP-dependent protease subunit HslV (179 aa).

The active site involves Thr6. Residues Ser162, Cys165, and Thr168 each coordinate Na(+).

It belongs to the peptidase T1B family. HslV subfamily. In terms of assembly, a double ring-shaped homohexamer of HslV is capped on each side by a ring-shaped HslU homohexamer. The assembly of the HslU/HslV complex is dependent on binding of ATP.

It is found in the cytoplasm. The catalysed reaction is ATP-dependent cleavage of peptide bonds with broad specificity.. Its activity is regulated as follows. Allosterically activated by HslU binding. Its function is as follows. Protease subunit of a proteasome-like degradation complex believed to be a general protein degrading machinery. The sequence is that of ATP-dependent protease subunit HslV from Maridesulfovibrio salexigens (strain ATCC 14822 / DSM 2638 / NCIMB 8403 / VKM B-1763) (Desulfovibrio salexigens).